The primary structure comprises 104 residues: Protamine-2 (104 aa).

Phosphoserine occurs at positions 8 and 10. A disordered region spans residues 23-104; the sequence is WQEQGRNGQE…SRRRRRCRRY (82 aa). Residues 24–35 are compositionally biased toward low complexity; it reads QEQGRNGQEEQG. Serine 37 carries the phosphoserine modification. Positions 54-104 are enriched in basic residues; that stretch reads YRRRRCSRRRRYRIHRRRSRSCRRRRRRSCRYRRRPRRGCRSRRRRRCRRY.

The protein belongs to the protamine P2 family. In terms of assembly, interacts with TDRP. In terms of processing, proteolytic processing into mature chains is required for histone eviction during spermatogenesis. Transition proteins (TNP1 and TNP2) are required for processing. Testis.

It is found in the nucleus. It localises to the chromosome. In terms of biological role, protamines substitute for histones in the chromatin of sperm during the haploid phase of spermatogenesis. They compact sperm DNA into a highly condensed, stable and inactive complex. The chain is Protamine-2 (PRM2) from Callithrix jacchus (White-tufted-ear marmoset).